A 947-amino-acid chain; its full sequence is Valine--tRNA ligase (947 aa).

Positions 45 to 55 match the 'HIGH' region motif; the sequence is PNVTGSLHMGH. A 'KMSKS' region motif is present at residues 591-595; sequence KMSKS. Lys594 contributes to the ATP binding site. Residues 879–943 are a coiled coil; it reads DLAAEQARLE…ASLRTALTRV (65 aa).

The protein belongs to the class-I aminoacyl-tRNA synthetase family. ValS type 1 subfamily. Monomer.

Its subcellular location is the cytoplasm. It carries out the reaction tRNA(Val) + L-valine + ATP = L-valyl-tRNA(Val) + AMP + diphosphate. Functionally, catalyzes the attachment of valine to tRNA(Val). As ValRS can inadvertently accommodate and process structurally similar amino acids such as threonine, to avoid such errors, it has a 'posttransfer' editing activity that hydrolyzes mischarged Thr-tRNA(Val) in a tRNA-dependent manner. This chain is Valine--tRNA ligase, found in Agrobacterium fabrum (strain C58 / ATCC 33970) (Agrobacterium tumefaciens (strain C58)).